Here is a 523-residue protein sequence, read N- to C-terminus: Calcium-dependent protein kinase 34 (523 aa).

Positions 1–60 (MGNCCSHGRDSDDNKEEPRPENGGGGVGAAEASVRASKHPPASPPPATKQGPIGPVLGRP) are disordered. Gly2 carries the N-myristoyl glycine lipid modification. A compositionally biased stretch (basic and acidic residues) spans 7–20 (HGRDSDDNKEEPRP). Residues 68 to 326 (YTLGKELGRG…AAQVLNHPWI (259 aa)) form the Protein kinase domain. ATP is bound by residues 74-82 (LGRGQFGVT) and Lys97. Residue Asp192 is the Proton acceptor of the active site. Residue Ser232 is modified to Phosphoserine. The segment at 332–362 (APDVPLDNAVMSRLKQFKAMNNFKKVALRVI) is autoinhibitory domain. EF-hand domains are found at residues 369 to 404 (EEIM…QGTR), 405 to 440 (LSEY…INRL), 441 to 476 (DREE…FGMN), and 480 to 511 (DIKE…GNPD). Residues Asp382, Asp384, Ser386, Thr388, Glu393, Asp418, Asp420, Asn422, Thr424, Glu429, Asp454, Asp456, Ser458, Tyr460, Glu465, Asp489, Asp491, Asp493, Arg495, and Glu500 each coordinate Ca(2+).

The protein belongs to the protein kinase superfamily. Ser/Thr protein kinase family. CDPK subfamily.

It localises to the membrane. It catalyses the reaction L-seryl-[protein] + ATP = O-phospho-L-seryl-[protein] + ADP + H(+). The enzyme catalyses L-threonyl-[protein] + ATP = O-phospho-L-threonyl-[protein] + ADP + H(+). With respect to regulation, activated by calcium. Autophosphorylation may play an important role in the regulation of the kinase activity. Functionally, may play a role in signal transduction pathways that involve calcium as a second messenger. This is Calcium-dependent protein kinase 34 (CPK34) from Arabidopsis thaliana (Mouse-ear cress).